We begin with the raw amino-acid sequence, 1337 residues long: C-Jun-amino-terminal kinase-interacting protein 3 (1337 aa).

The RH1 domain maps to 12–100 (VVVYQDDYCS…LTQYEREKAL (89 aa)). The segment at 50–80 (EVVKELMPLVVNVLENLDSVLSENQEHEVEL) is kinesin-binding domain (KBD); essential for its function in axon elongation. Residues 58 to 177 (LVVNVLENLD…HTEMIQTYVE (120 aa)) are a coiled coil. 2 disordered regions span residues 183–211 (KMQQ…SLNV) and 245–285 (SSSY…PSAA). Residues 184–198 (MQQVGGSGQTESSLP) show a composition bias toward polar residues. A JNK-binding domain (JBD); essential for its function in axon elongation region spans residues 210-226 (NVFPLADGMVRAQMGGK). Low complexity predominate over residues 261 to 270 (SSAAATPSTT). A phosphothreonine; by MAPK mark is found at T266, T276, and T287. Polar residues predominate over residues 271 to 282 (GTKSNTPTSSVP). Phosphoserine; by ROCK1 occurs at positions 315 and 365. S366 carries the phosphoserine modification. The tract at residues 424–459 (LLLENSQLLETKNALNVVKNDLIAKVDQLSGEQEVL) is leucine zipper-like domain (LZ); essential for its function in axon elongation. Residues 437-555 (ALNVVKNDLI…LQEAVRWTEM (119 aa)) are a coiled coil. The segment at 459–515 (LKGELEAAKQAKVKLENRIKELEEELKRVKSEAVTARREPREEVEDVSSYLCTELDK) is interaction with NTRK2. Residues 521–595 (RRRFTRVEMA…SPPPAKRSYP (75 aa)) enclose the RH2 domain. S603 is subject to Phosphoserine. The tract at residues 633-655 (DDCTSSARREQKREQYRQVREHV) is disordered. Residues 639–655 (ARREQKREQYRQVREHV) show a composition bias toward basic and acidic residues. S677 carries the post-translational modification Phosphoserine. Disordered stretches follow at residues 719–772 (WKPH…ATSS) and 859–966 (PRSN…TTTS). The segment covering 739 to 765 (LTCDREGEGEPKSTHPSPEKKKAKETP) has biased composition (basic and acidic residues). 2 stretches are compositionally biased toward polar residues: residues 879–892 (VATT…PSQS) and 941–952 (ENGSESNGTIVQ).

The protein belongs to the JIP scaffold family. Forms homo- or heterooligomeric complexes. The central region of MAPK8IP3 interacts with the C-terminal of MAPK8IP2 but not MAPK8IP1. Binds specific components of the JNK signaling pathway namely MAPK8/JNK1, MAPK9/JNK2 and MAPK10/JNK3 to the N-terminal region, MAP2K4/MKK4 and MAP2K7/MKK7 to the central region and MAP3K11 to the C-terminal region. Binds the TPR motif-containing C-terminal of kinesin light chain, KLC1. Pre-assembled MAPK8IP1 scaffolding complexes are then transported as a cargo of kinesin, to the required subcellular location. Interacts with ROCK1 and this interaction is enhanced by ultraviolet-B (UVB) radiation. Interacts with SH3RF2. Interacts with NTRK2/TRKB and NTRK3/TRKC. Phosphorylation by ROCK1 is crucial for the recruitment of JNK. In terms of tissue distribution, highly expressed throughout many regions of the brain and at lower levels in the heart, liver, lung, testes and kidney. All isoforms have been identified in the brain, isoform 1a is also expressed in the spleen and lung.

The protein resides in the cytoplasm. It localises to the golgi apparatus. Its subcellular location is the cytoplasmic vesicle. The protein localises to the cell projection. It is found in the growth cone. The protein resides in the axon. It localises to the dendrite. Its subcellular location is the perinuclear region. In terms of biological role, the JNK-interacting protein (JIP) group of scaffold proteins selectively mediates JNK signaling by aggregating specific components of the MAPK cascade to form a functional JNK signaling module. May function as a regulator of vesicle transport, through interactions with the JNK-signaling components and motor proteins. Promotes neuronal axon elongation in a kinesin- and JNK-dependent manner. Activates cofilin at axon tips via local activation of JNK, thereby regulating filopodial dynamics and enhancing axon elongation. Its binding to kinesin heavy chains (KHC), promotes kinesin-1 motility along microtubules and is essential for axon elongation and regeneration. Regulates cortical neuronal migration by mediating NTRK2/TRKB anterograde axonal transport during brain development. Acts as an adapter that bridges the interaction between NTRK2/TRKB and KLC1 and drives NTRK2/TRKB axonal but not dendritic anterograde transport, which is essential for subsequent BDNF-triggered signaling and filopodia formation. The polypeptide is C-Jun-amino-terminal kinase-interacting protein 3 (Mapk8ip3) (Mus musculus (Mouse)).